Consider the following 723-residue polypeptide: Polyribonucleotide nucleotidyltransferase (723 aa).

The Mg(2+) site is built by aspartate 488 and aspartate 494. One can recognise a KH domain in the interval 555–614; that stretch reads PRMITMKIHPDKIREVIGKGGSTIQALTKETGTTIDIQEDGTITIASTSTEGMAEAKRRI. An S1 motif domain is found at 624–692; the sequence is GKIYAGTVLK…EKGRLRLSLK (69 aa). The tract at residues 701–723 is disordered; it reads SISPINAGESAAPAAPAGGSEQQ. Positions 707–723 are enriched in low complexity; that stretch reads AGESAAPAAPAGGSEQQ.

This sequence belongs to the polyribonucleotide nucleotidyltransferase family. It depends on Mg(2+) as a cofactor.

Its subcellular location is the cytoplasm. It catalyses the reaction RNA(n+1) + phosphate = RNA(n) + a ribonucleoside 5'-diphosphate. Functionally, involved in mRNA degradation. Catalyzes the phosphorolysis of single-stranded polyribonucleotides processively in the 3'- to 5'-direction. The protein is Polyribonucleotide nucleotidyltransferase of Cupriavidus taiwanensis (strain DSM 17343 / BCRC 17206 / CCUG 44338 / CIP 107171 / LMG 19424 / R1) (Ralstonia taiwanensis (strain LMG 19424)).